The primary structure comprises 209 residues: Ribosomal RNA large subunit methyltransferase E (209 aa).

5 residues coordinate S-adenosyl-L-methionine: Gly63, Trp65, Asp83, Asp99, and Asp124. Lys164 acts as the Proton acceptor in catalysis.

The protein belongs to the class I-like SAM-binding methyltransferase superfamily. RNA methyltransferase RlmE family.

It localises to the cytoplasm. It carries out the reaction uridine(2552) in 23S rRNA + S-adenosyl-L-methionine = 2'-O-methyluridine(2552) in 23S rRNA + S-adenosyl-L-homocysteine + H(+). Specifically methylates the uridine in position 2552 of 23S rRNA at the 2'-O position of the ribose in the fully assembled 50S ribosomal subunit. This is Ribosomal RNA large subunit methyltransferase E from Vibrio parahaemolyticus serotype O3:K6 (strain RIMD 2210633).